The primary structure comprises 253 residues: Flap endonuclease Xni (253 aa).

Asp104 contacts Mg(2+). Residues 160–250 (VAPQQLTDFW…HGNLQQLRLN (91 aa)) enclose the 5'-3' exonuclease domain. K(+) is bound by residues Leu171, Ala172, Pro180, Ile182, and Ile185. The tract at residues 184–189 (GIGAKT) is interaction with DNA.

This sequence belongs to the Xni family. Mg(2+) is required as a cofactor. It depends on K(+) as a cofactor.

In terms of biological role, has flap endonuclease activity. During DNA replication, flap endonucleases cleave the 5'-overhanging flap structure that is generated by displacement synthesis when DNA polymerase encounters the 5'-end of a downstream Okazaki fragment. This is Flap endonuclease Xni from Edwardsiella ictaluri (strain 93-146).